The following is a 264-amino-acid chain: uncharacterized protein (264 aa).

15–22 contributes to the ATP binding site; the sequence is KGGTGKTT.

This sequence belongs to the ParA family. MinD subfamily.

This is an uncharacterized protein from Methanocaldococcus jannaschii (strain ATCC 43067 / DSM 2661 / JAL-1 / JCM 10045 / NBRC 100440) (Methanococcus jannaschii).